The sequence spans 270 residues: Tryptophan synthase alpha chain (270 aa).

Residues E51 and D62 each act as proton acceptor in the active site.

This sequence belongs to the TrpA family. As to quaternary structure, tetramer of two alpha and two beta chains.

The enzyme catalyses (1S,2R)-1-C-(indol-3-yl)glycerol 3-phosphate + L-serine = D-glyceraldehyde 3-phosphate + L-tryptophan + H2O. It participates in amino-acid biosynthesis; L-tryptophan biosynthesis; L-tryptophan from chorismate: step 5/5. In terms of biological role, the alpha subunit is responsible for the aldol cleavage of indoleglycerol phosphate to indole and glyceraldehyde 3-phosphate. In Methanothermobacter thermautotrophicus (strain ATCC 29096 / DSM 1053 / JCM 10044 / NBRC 100330 / Delta H) (Methanobacterium thermoautotrophicum), this protein is Tryptophan synthase alpha chain.